Here is a 246-residue protein sequence, read N- to C-terminus: tRNA pseudouridine synthase A (246 aa).

The Nucleophile role is filled by aspartate 52. Substrate is bound at residue tyrosine 111.

It belongs to the tRNA pseudouridine synthase TruA family. Homodimer.

The catalysed reaction is uridine(38/39/40) in tRNA = pseudouridine(38/39/40) in tRNA. In terms of biological role, formation of pseudouridine at positions 38, 39 and 40 in the anticodon stem and loop of transfer RNAs. The polypeptide is tRNA pseudouridine synthase A (Parvibaculum lavamentivorans (strain DS-1 / DSM 13023 / NCIMB 13966)).